Here is a 116-residue protein sequence, read N- to C-terminus: Large ribosomal subunit protein bL21c (116 aa).

This sequence belongs to the bacterial ribosomal protein bL21 family. In terms of assembly, part of the 50S ribosomal subunit.

The protein localises to the plastid. It localises to the chloroplast. In terms of biological role, this protein binds to 23S rRNA. This is Large ribosomal subunit protein bL21c from Marchantia polymorpha (Common liverwort).